The chain runs to 308 residues: MTEPQTNRTSGAKIIDGKAFAADVRGQVAGHVQRLKDEHGITPGLAVVLVGEDPASEVYVSHKHKATVEVGMTSFEHKLPADTSEDDLFALIDKLNADPAVHGILCQFPVPDHLDERRTVARISPAKDVDGLSVTNAGLLSSGGEALVSCTPLGCLMLLRAEFDSLSGKDAVVIGRSNLFGKPMAQLLLGDNCTVTIAHSRTKDLADVCRRADILVAAVGRAEMVRGDWIKPGATVIDVGISRVPHPDKPGKTKLIGDVHFAEAVDVAGAITPVPGGVGPMTIACLLANTVTACCRAHGLDEPRGLTA.

NADP(+) contacts are provided by residues 175 to 177 (GRS), serine 200, and isoleucine 241.

It belongs to the tetrahydrofolate dehydrogenase/cyclohydrolase family. As to quaternary structure, homodimer.

It carries out the reaction (6R)-5,10-methylene-5,6,7,8-tetrahydrofolate + NADP(+) = (6R)-5,10-methenyltetrahydrofolate + NADPH. The catalysed reaction is (6R)-5,10-methenyltetrahydrofolate + H2O = (6R)-10-formyltetrahydrofolate + H(+). The protein operates within one-carbon metabolism; tetrahydrofolate interconversion. Its function is as follows. Catalyzes the oxidation of 5,10-methylenetetrahydrofolate to 5,10-methenyltetrahydrofolate and then the hydrolysis of 5,10-methenyltetrahydrofolate to 10-formyltetrahydrofolate. This is Bifunctional protein FolD from Jannaschia sp. (strain CCS1).